The sequence spans 194 residues: Probable proteasome subunit beta type-4 (194 aa).

The protein belongs to the peptidase T1B family. As to quaternary structure, the 26S proteasome consists of a 20S proteasome core and two 19S regulatory subunits. The 20S proteasome core is composed of 28 subunits that are arranged in four stacked rings, resulting in a barrel-shaped structure. The two end rings are each formed by seven alpha subunits, and the two central rings are each formed by seven beta subunits. The catalytic chamber with the active sites is on the inside of the barrel.

It is found in the cytoplasm. The protein resides in the nucleus. Non-catalytic component of the proteasome, a multicatalytic proteinase complex which is characterized by its ability to cleave peptides with Arg, Phe, Tyr, Leu, and Glu adjacent to the leaving group at neutral or slightly basic pH. The proteasome has an ATP-dependent proteolytic activity. This Meyerozyma guilliermondii (strain ATCC 6260 / CBS 566 / DSM 6381 / JCM 1539 / NBRC 10279 / NRRL Y-324) (Yeast) protein is Probable proteasome subunit beta type-4 (PRO2).